The chain runs to 121 residues: Protein YxiB (121 aa).

The polypeptide is Protein YxiB (yxiB) (Bacillus subtilis (strain 168)).